Reading from the N-terminus, the 2439-residue chain is Mucin-6 (2439 aa).

Positions 1-22 are cleaved as a signal peptide; sequence MVQRWLLLSCCGALLSAGLANT. One can recognise a VWFD 1 domain in the interval 43–214; that stretch reads GQCSTWGAGH…KLDDPGEICT (172 aa). Intrachain disulfides connect Cys45/Cys176 and Cys67/Cys213. A glycan (N-linked (GlcNAc...) asparagine) is linked at Asn268. The region spanning 302 to 357 is the TIL domain; sequence CPANQVYQECGSACVKTCSNPQHSCSSSCTFGCFCPEGTVLNDLSNNHTCVPVTQC. The 185-residue stretch at 395–579 folds into the VWFD 2 domain; it reads GHCSLEGGSF…ALERETDPCS (185 aa). 2 disulfide bridges follow: Cys397–Cys533 and Cys419–Cys578. Asn486 and Asn659 each carry an N-linked (GlcNAc...) asparagine glycan. The VWFD 3 domain maps to 866-1038; sequence STCTLYGEGH…NSWKESPLCG (173 aa). 4 cysteine pairs are disulfide-bonded: Cys868–Cys1002, Cys890–Cys1037, Cys899–Cys999, and Cys917–Cys924. N-linked (GlcNAc...) asparagine glycans are attached at residues Asn975 and Asn1179. Disordered regions lie at residues 1202–1455, 1471–1626, 1642–1834, 1868–1983, 2033–2077, 2090–2196, 2233–2278, and 2323–2348; these read PQPP…TSLV, ATSA…LVTP, SASI…HPHT, SIHS…STGP, ATSA…THSS, SSSW…SASP, VSPT…SLTT, and LTAH…SPGV. Residues 1224-1265 are compositionally biased toward low complexity; the sequence is TGTSTTIGLLSSTGPSPSSNHTPASPTQTPLLPATLTSSKPT. Over residues 1276–1286 the composition is skewed to polar residues; that stretch reads TAVTPQATSGL. Positions 1294–1339 are enriched in low complexity; it reads STATKPTVTQATTRATASTASPATTSTAQSTTRTTMTLPTPATSGT. Residues 1340–1351 show a composition bias toward polar residues; that stretch reads SPTLPKSTNQEL. 2 stretches are compositionally biased toward low complexity: residues 1352–1373 and 1381–1415; these read PGTT…TGPT and TRPT…AGSP. Composition is skewed to polar residues over residues 1416–1455, 1471–1481, and 1490–1520; these read VPST…TSLV, ATSASNHSAPT, and LKAT…STNK. Low complexity-rich tracts occupy residues 1521–1567 and 1574–1611; these read TPTS…ATSS and TTHS…PQTT. The 1; truncated repeat unit spans residues 1561-1738; sequence TNSATSSRPP…TTSGTSQSRS (178 aa). The segment at 1607–1953 is approximate repeats; it reads HPQTTLPTHV…STGTRTPVAH (347 aa). The segment covering 1659-1686 has biased composition (polar residues); that stretch reads LKATGSTHTAPTMTLTTSGTSQALSSLN. Over residues 1687-1768 the composition is skewed to low complexity; it reads TAKTSTSLHS…PEVTSTSTTS (82 aa). Residues 1769 to 1793 show a composition bias toward polar residues; it reads ITPNHTSTGTRTPVAHTTSATSSRL. Copy 2 of the repeat occupies 1785–1953; sequence TTSATSSRLP…STGTRTPVAH (169 aa). Low complexity-rich tracts occupy residues 1794-1834 and 1891-1917; these read PTPF…HPHT and TAPP…TSTS. Over residues 1918–1962 the composition is skewed to polar residues; the sequence is LPYHTSSTHHPEVTPTSTTNITPKHTSTGTRTPVAHTTSASSSRL. The span at 1963–1983 shows a compositional bias: low complexity; that stretch reads PTPFTTHSPPTGSSPFSSTGP. A compositionally biased stretch (polar residues) spans 2052–2070; that stretch reads LKATGSTHTAPPMTVTTSG. Over residues 2090 to 2102 the composition is skewed to low complexity; sequence SSSWLPQNSSSRP. Polar residues predominate over residues 2107 to 2120; the sequence is ITTQLPHLSSATTP. Positions 2121-2196 are enriched in low complexity; the sequence is VSTTNQLSSS…PTTASVSASP (76 aa). Positions 2240–2264 are enriched in polar residues; the sequence is HLASSTIAFPSTPRTTASTHTAPAF. A compositionally biased stretch (low complexity) spans 2265 to 2278; it reads SSQSTTSRSTSLTT. Polar residues predominate over residues 2323–2347; sequence LTAHGSTPASAPVSSLGTPTPTSPG. Disulfide bonds link Cys2349–Cys2396, Cys2363–Cys2410, Cys2372–Cys2430, and Cys2376–Cys2432. Residues 2349–2438 form the CTCK domain; sequence CSVREQQEEI…HCVCSSVACG (90 aa).

In terms of assembly, multimer; disulfide-linked. In terms of processing, O-glycosylated. Expressed in the regenerative zone of gastric antrum, gastric body mucosa and gastric incisura mucosa. Expressed in the deeper mucous glands of gastric antrum. Overexpressed in Helicobacter pylori infected gastric epithelium. Highly expressed in duodenal Brunner's glands, gall bladder, seminal vesicle, pancreatic centroacinar cells and ducts, and periductal glands of the common bile duct.

The protein localises to the secreted. Its function is as follows. May provide a mechanism for modulation of the composition of the protective mucus layer related to acid secretion or the presence of bacteria and noxious agents in the lumen. Plays an important role in the cytoprotection of epithelial surfaces and are used as tumor markers in a variety of cancers. May play a role in epithelial organogenesis. In Homo sapiens (Human), this protein is Mucin-6 (MUC6).